We begin with the raw amino-acid sequence, 474 residues long: Eukaryotic translation initiation factor 3 subunit L (474 aa).

The region spanning 255–449 (DAIRMFSHIL…DLDYALQGDL (195 aa)) is the PCI domain.

The protein belongs to the eIF-3 subunit L family. In terms of assembly, component of the eukaryotic translation initiation factor 3 (eIF-3) complex.

It is found in the cytoplasm. In terms of biological role, component of the eukaryotic translation initiation factor 3 (eIF-3) complex, which is involved in protein synthesis of a specialized repertoire of mRNAs and, together with other initiation factors, stimulates binding of mRNA and methionyl-tRNAi to the 40S ribosome. The eIF-3 complex specifically targets and initiates translation of a subset of mRNAs involved in cell proliferation. This Neurospora crassa (strain ATCC 24698 / 74-OR23-1A / CBS 708.71 / DSM 1257 / FGSC 987) protein is Eukaryotic translation initiation factor 3 subunit L.